Consider the following 294-residue polypeptide: Ribosomal protein L11 methyltransferase (294 aa).

Residues Thr-146, Gly-167, Asp-189, and Asn-231 each coordinate S-adenosyl-L-methionine.

The protein belongs to the methyltransferase superfamily. PrmA family.

It localises to the cytoplasm. It catalyses the reaction L-lysyl-[protein] + 3 S-adenosyl-L-methionine = N(6),N(6),N(6)-trimethyl-L-lysyl-[protein] + 3 S-adenosyl-L-homocysteine + 3 H(+). Methylates ribosomal protein L11. This Aliivibrio fischeri (strain ATCC 700601 / ES114) (Vibrio fischeri) protein is Ribosomal protein L11 methyltransferase.